A 1148-amino-acid chain; its full sequence is Putative transcription factor SEF1 (1148 aa).

Positions 1–51 (MVKDNRDSDQDQDFSSAHMKRQPEQQQLQQHQFPSKKQRISHHDDSHQINH) are disordered. S8 is subject to Phosphoserine. A DNA-binding region (zn(2)-C6 fungal-type) is located at residues 57 to 87 (CTHCRQHKIKCDASQNFPHPCSRCEKIGLHC). The interval 148-180 (PTPGTIIPNPDSSPSSGSPTSSAAQRDSKVSVQ) is disordered. Residues 150–169 (PGTIIPNPDSSPSSGSPTSS) show a composition bias toward low complexity. S263 carries the post-translational modification Phosphoserine. The interval 524-550 (EESEEDNNDSIDNNNNDKRNKKDEPHV) is disordered. Residues 538–550 (NNDKRNKKDEPHV) show a composition bias toward basic and acidic residues. S806 carries the post-translational modification Phosphoserine. Residues 1029–1050 (RSQSSMSHSRTPIASKSNNMTD) show a composition bias toward polar residues. Residues 1029-1063 (RSQSSMSHSRTPIASKSNNMTDLHSVVSDPGSSKS) are disordered.

The protein localises to the nucleus. Its function is as follows. Putative transcription factor that seems to be involved in the sporulation process. Suppresses the lethal phenotype of RPM2 deletion. This Saccharomyces cerevisiae (strain ATCC 204508 / S288c) (Baker's yeast) protein is Putative transcription factor SEF1 (SEF1).